Here is a 123-residue protein sequence, read N- to C-terminus: Small ribosomal subunit protein uS13 (123 aa).

The disordered stretch occupies residues 92–123 (HRRGLPVRGQKTKTNARTRKGPKKLVVSRKKK).

It belongs to the universal ribosomal protein uS13 family. In terms of assembly, part of the 30S ribosomal subunit. Forms a loose heterodimer with protein S19. Forms two bridges to the 50S subunit in the 70S ribosome.

Located at the top of the head of the 30S subunit, it contacts several helices of the 16S rRNA. In the 70S ribosome it contacts the 23S rRNA (bridge B1a) and protein L5 of the 50S subunit (bridge B1b), connecting the 2 subunits; these bridges are implicated in subunit movement. Contacts the tRNAs in the A and P-sites. The chain is Small ribosomal subunit protein uS13 from Clostridium tetani (strain Massachusetts / E88).